Here is a 100-residue protein sequence, read N- to C-terminus: MAEANIRALADIIRRPIITEKATRLLENNQYTFEVDPRASKPEIKAAIEALFQVKVVGLSTQLPPRKARRVGRFAGHRAQVKRAVARLADGDSITLFPEV.

This sequence belongs to the universal ribosomal protein uL23 family. Part of the 50S ribosomal subunit. Contacts protein L29, and trigger factor when it is bound to the ribosome.

In terms of biological role, one of the early assembly proteins it binds 23S rRNA. One of the proteins that surrounds the polypeptide exit tunnel on the outside of the ribosome. Forms the main docking site for trigger factor binding to the ribosome. The chain is Large ribosomal subunit protein uL23 from Synechococcus elongatus (strain ATCC 33912 / PCC 7942 / FACHB-805) (Anacystis nidulans R2).